The following is a 50-amino-acid chain: Large ribosomal subunit protein bL32c (50 aa).

It belongs to the bacterial ribosomal protein bL32 family.

Its subcellular location is the plastid. The protein is Large ribosomal subunit protein bL32c (rpl32) of Euglena longa (Euglenophycean alga).